Consider the following 146-residue polypeptide: Transcriptional regulator MraZ (146 aa).

SpoVT-AbrB domains are found at residues 5-47 and 76-119; these read EYYH…TITD and SVQV…AKER.

This sequence belongs to the MraZ family. Forms oligomers.

The protein localises to the cytoplasm. Its subcellular location is the nucleoid. The polypeptide is Transcriptional regulator MraZ (Dictyoglomus turgidum (strain DSM 6724 / Z-1310)).